The primary structure comprises 320 residues: MNWISNYVRPTINSLFSRREVPENLWRKCPECGTMLFHRELSDNLFVCISCDHHMAITPRQRFEALFDGGVFSEVKVPAPIADPLQFKDQKKYPERMKSAVKATGEPEAMLVAEGEIGRTPIVAAAQDFSFMGGSMGMYVGNAIIAAAERAVALKRPLILFSAAGGARMQEGILSLMQMPRTTVAVQMLKEAGLPYIVVLTHPTTGGVTASYAMLGDVQIAEPNALICFAGPRVIEQTIREKLPEGFQRAEYLLDHGMLDRVTHRMKLRDELIRITRMLLGLGPAIVGDLPAPDPAPATPEPQKAAPSAPAQDKPGAGRS.

Residues 25 to 294 enclose the CoA carboxyltransferase N-terminal domain; it reads LWRKCPECGT…AIVGDLPAPD (270 aa). Residues Cys-29, Cys-32, Cys-48, and Cys-51 each contribute to the Zn(2+) site. The C4-type zinc-finger motif lies at 29–51; sequence CPECGTMLFHRELSDNLFVCISC. The interval 290–320 is disordered; it reads LPAPDPAPATPEPQKAAPSAPAQDKPGAGRS.

The protein belongs to the AccD/PCCB family. In terms of assembly, acetyl-CoA carboxylase is a heterohexamer composed of biotin carboxyl carrier protein (AccB), biotin carboxylase (AccC) and two subunits each of ACCase subunit alpha (AccA) and ACCase subunit beta (AccD). Zn(2+) serves as cofactor.

It localises to the cytoplasm. The enzyme catalyses N(6)-carboxybiotinyl-L-lysyl-[protein] + acetyl-CoA = N(6)-biotinyl-L-lysyl-[protein] + malonyl-CoA. It functions in the pathway lipid metabolism; malonyl-CoA biosynthesis; malonyl-CoA from acetyl-CoA: step 1/1. Component of the acetyl coenzyme A carboxylase (ACC) complex. Biotin carboxylase (BC) catalyzes the carboxylation of biotin on its carrier protein (BCCP) and then the CO(2) group is transferred by the transcarboxylase to acetyl-CoA to form malonyl-CoA. In Dinoroseobacter shibae (strain DSM 16493 / NCIMB 14021 / DFL 12), this protein is Acetyl-coenzyme A carboxylase carboxyl transferase subunit beta.